Consider the following 232-residue polypeptide: Large ribosomal subunit protein uL1 (232 aa).

The protein belongs to the universal ribosomal protein uL1 family. Part of the 50S ribosomal subunit.

In terms of biological role, binds directly to 23S rRNA. The L1 stalk is quite mobile in the ribosome, and is involved in E site tRNA release. Its function is as follows. Protein L1 is also a translational repressor protein, it controls the translation of the L11 operon by binding to its mRNA. This chain is Large ribosomal subunit protein uL1, found in Alkaliphilus metalliredigens (strain QYMF).